Consider the following 181-residue polypeptide: Inner membrane-spanning protein YciB (181 aa).

The next 5 membrane-spanning stretches (helical) occupy residues 22-42 (IYTATGALIIATAIQLVVTYA), 50-70 (MQLITFIMVTVFGGMTIFLHD), 80-100 (IVYCVFAAGLIIAHILGKPVI), 122-142 (WVLFFTVCAIANLYVAFEMPL), and 148-168 (FKVFGLLGLTFLYTLFTGMYV).

This sequence belongs to the YciB family.

The protein resides in the cell inner membrane. In terms of biological role, plays a role in cell envelope biogenesis, maintenance of cell envelope integrity and membrane homeostasis. The sequence is that of Inner membrane-spanning protein YciB from Aliivibrio fischeri (strain MJ11) (Vibrio fischeri).